A 36-amino-acid chain; its full sequence is ADCLNEGDWCADWSGPSCCGEMWCSCPGFGKCRCKK.

Disulfide bonds link C3-C19, C10-C24, C18-C34, and C26-C32.

Expressed by the venom gland.

It localises to the secreted. In terms of biological role, binds at site 4 of sodium channels (Nav) and inhibits the fast inactivation of cockroach channels. This toxin is active only on insects. Has a potent activity against S.litura larvae. This chain is Delta-amaurobitoxin-Pl1c, found in Pireneitega luctuosa (Tangled nest spider).